The primary structure comprises 447 residues: UDP-N-acetylmuramate--L-alanine ligase (447 aa).

ATP is bound at residue 108-114; the sequence is GSHGKTS.

The protein belongs to the MurCDEF family.

Its subcellular location is the cytoplasm. It carries out the reaction UDP-N-acetyl-alpha-D-muramate + L-alanine + ATP = UDP-N-acetyl-alpha-D-muramoyl-L-alanine + ADP + phosphate + H(+). It participates in cell wall biogenesis; peptidoglycan biosynthesis. In terms of biological role, cell wall formation. In Listeria welshimeri serovar 6b (strain ATCC 35897 / DSM 20650 / CCUG 15529 / CIP 8149 / NCTC 11857 / SLCC 5334 / V8), this protein is UDP-N-acetylmuramate--L-alanine ligase.